A 1548-amino-acid polypeptide reads, in one-letter code: Multidrug resistance protein (1548 aa).

Residues 1 to 238 (MVDNGHVTIA…YHVWAQILPK (238 aa)) are Cytoplasmic-facing. One can recognise an ABC transmembrane type-1 1 domain in the interval 231–514 (VWAQILPKLL…IPIIISSILQ (284 aa)). A helical transmembrane segment spans residues 239 to 256 (LLSDVTALMLPVLLEYFV). The N-linked (GlcNAc...) asparagine glycan is linked to N263. 5 consecutive transmembrane segments (helical) span residues 266-287 (WGWG…SCSA), 349-367 (VMYF…LLLI), 375-392 (VPGM…AVIS), 463-480 (ATPT…HVSG), and 500-519 (VSFF…FVSA). Over 520–932 (KRVTAFIECP…PWSTYVAYLK (413 aa)) the chain is Cytoplasmic. In terms of domain architecture, ABC transporter 1 spans 634–855 (VEEGDREYYQ…ALEETLRGEL (222 aa)). 667 to 674 (GSTGSGKS) provides a ligand contact to ATP. The next 4 membrane-spanning stretches (helical) occupy residues 933–950 (SCGG…FALT), 975–993 (TYLY…GSPL), 1051–1070 (GYLY…IIMV), and 1072–1088 (VQPF…YSYY). The ABC transmembrane type-1 2 domain maps to 940–1221 (WGCLLATFAL…LVRQVAMVEA (282 aa)). 2 N-linked (GlcNAc...) asparagine glycosylation sites follow: N1095 and N1154. A run of 2 helical transmembrane segments spans residues 1164–1182 (LEFL…GVIG) and 1186–1205 (GASS…SMTL). Over 1206-1548 (TETLNWLVRQ…RIVQPAVLSD (343 aa)) the chain is Cytoplasmic. The ABC transporter 2 domain maps to 1286-1521 (LVLEGVQMRY…HQSMFHSMVE (236 aa)). ATP is bound at residue 1320 to 1327 (GRTGSGKS).

It belongs to the ABC transporter superfamily. ABCB family. Multidrug resistance exporter (TC 3.A.1.201) subfamily.

The protein localises to the membrane. It carries out the reaction ATP + H2O + xenobioticSide 1 = ADP + phosphate + xenobioticSide 2.. The chain is Multidrug resistance protein (PGPA) from Leishmania tarentolae (Sauroleishmania tarentolae).